The chain runs to 467 residues: Trigger factor (467 aa).

The region spanning 162–243 (GDFVSIDLSA…LNSVKERHLP (82 aa)) is the PPIase FKBP-type domain. Positions 426 to 435 (EEGNELDLDE) are enriched in acidic residues. A disordered region spans residues 426–467 (EEGNELDLDELFGTQAGEEQGEQAEGTEATDEQSAKADAKAE). Positions 436 to 452 (LFGTQAGEEQGEQAEGT) are enriched in low complexity. Residues 458–467 (QSAKADAKAE) are compositionally biased toward basic and acidic residues.

It belongs to the FKBP-type PPIase family. Tig subfamily.

It localises to the cytoplasm. It carries out the reaction [protein]-peptidylproline (omega=180) = [protein]-peptidylproline (omega=0). Involved in protein export. Acts as a chaperone by maintaining the newly synthesized protein in an open conformation. Functions as a peptidyl-prolyl cis-trans isomerase. This Saccharopolyspora erythraea (strain ATCC 11635 / DSM 40517 / JCM 4748 / NBRC 13426 / NCIMB 8594 / NRRL 2338) protein is Trigger factor.